The chain runs to 469 residues: Siroheme synthase (469 aa).

The interval Met-1–Leu-211 is precorrin-2 dehydrogenase /sirohydrochlorin ferrochelatase. NAD(+) contacts are provided by residues Glu-29 to Gln-30 and Asp-50 to Pro-51. Ser-136 carries the phosphoserine modification. The tract at residues Gly-227 to Asp-469 is uroporphyrinogen-III C-methyltransferase. Pro-236 is an S-adenosyl-L-methionine binding site. Asp-259 functions as the Proton acceptor in the catalytic mechanism. The active-site Proton donor is the Lys-281. Residues Gly-312–Asp-314, Ile-317, Thr-342–Ala-343, Met-394, and Gly-423 contribute to the S-adenosyl-L-methionine site.

It in the N-terminal section; belongs to the precorrin-2 dehydrogenase / sirohydrochlorin ferrochelatase family. This sequence in the C-terminal section; belongs to the precorrin methyltransferase family.

The enzyme catalyses uroporphyrinogen III + 2 S-adenosyl-L-methionine = precorrin-2 + 2 S-adenosyl-L-homocysteine + H(+). It carries out the reaction precorrin-2 + NAD(+) = sirohydrochlorin + NADH + 2 H(+). The catalysed reaction is siroheme + 2 H(+) = sirohydrochlorin + Fe(2+). The protein operates within cofactor biosynthesis; adenosylcobalamin biosynthesis; precorrin-2 from uroporphyrinogen III: step 1/1. It participates in cofactor biosynthesis; adenosylcobalamin biosynthesis; sirohydrochlorin from precorrin-2: step 1/1. It functions in the pathway porphyrin-containing compound metabolism; siroheme biosynthesis; precorrin-2 from uroporphyrinogen III: step 1/1. Its pathway is porphyrin-containing compound metabolism; siroheme biosynthesis; siroheme from sirohydrochlorin: step 1/1. The protein operates within porphyrin-containing compound metabolism; siroheme biosynthesis; sirohydrochlorin from precorrin-2: step 1/1. Multifunctional enzyme that catalyzes the SAM-dependent methylations of uroporphyrinogen III at position C-2 and C-7 to form precorrin-2 via precorrin-1. Then it catalyzes the NAD-dependent ring dehydrogenation of precorrin-2 to yield sirohydrochlorin. Finally, it catalyzes the ferrochelation of sirohydrochlorin to yield siroheme. This is Siroheme synthase from Hahella chejuensis (strain KCTC 2396).